A 135-amino-acid polypeptide reads, in one-letter code: Retinol-binding protein 1 (135 aa).

An Omega-N-methylarginine modification is found at tryptophan 9. The important for interaction with STRA6 stretch occupies residues 22–32 (RALDVNVALRK). All-trans-retinol-binding residues include lysine 41, methionine 63, and glutamine 109.

It belongs to the calycin superfamily. Fatty-acid binding protein (FABP) family. Interacts (only as retinol-free apoprotein) with STRA6. Detected in nearly all the tissues with higher expression in adult ovary, pancreas, pituitary gland and adrenal gland, and fetal liver.

The protein resides in the cytoplasm. The protein localises to the lipid droplet. Its function is as follows. Cytoplasmic retinol-binding protein. Accepts retinol from the transport protein STRA6, and thereby contributes to retinol uptake, storage and retinoid homeostasis. The chain is Retinol-binding protein 1 (RBP1) from Homo sapiens (Human).